The following is a 96-amino-acid chain: Co-chaperonin GroES (96 aa).

It belongs to the GroES chaperonin family. In terms of assembly, heptamer of 7 subunits arranged in a ring. Interacts with the chaperonin GroEL.

Its subcellular location is the cytoplasm. Together with the chaperonin GroEL, plays an essential role in assisting protein folding. The GroEL-GroES system forms a nano-cage that allows encapsulation of the non-native substrate proteins and provides a physical environment optimized to promote and accelerate protein folding. GroES binds to the apical surface of the GroEL ring, thereby capping the opening of the GroEL channel. This is Co-chaperonin GroES from Solidesulfovibrio magneticus (strain ATCC 700980 / DSM 13731 / RS-1) (Desulfovibrio magneticus).